Here is a 68-residue protein sequence, read N- to C-terminus: ATP synthase subunit c (68 aa).

2 helical membrane-spanning segments follow: residues 4–24 (IAAA…NGLI) and 45–65 (IMFI…VIAF).

Belongs to the ATPase C chain family. As to quaternary structure, F-type ATPases have 2 components, F(1) - the catalytic core - and F(0) - the membrane proton channel. F(1) has five subunits: alpha(3), beta(3), gamma(1), delta(1), epsilon(1). F(0) has three main subunits: a(1), b(2) and c(10-14). The alpha and beta chains form an alternating ring which encloses part of the gamma chain. F(1) is attached to F(0) by a central stalk formed by the gamma and epsilon chains, while a peripheral stalk is formed by the delta and b chains.

The protein resides in the cell membrane. Its function is as follows. F(1)F(0) ATP synthase produces ATP from ADP in the presence of a proton or sodium gradient. F-type ATPases consist of two structural domains, F(1) containing the extramembraneous catalytic core and F(0) containing the membrane proton channel, linked together by a central stalk and a peripheral stalk. During catalysis, ATP synthesis in the catalytic domain of F(1) is coupled via a rotary mechanism of the central stalk subunits to proton translocation. Functionally, key component of the F(0) channel; it plays a direct role in translocation across the membrane. A homomeric c-ring of between 10-14 subunits forms the central stalk rotor element with the F(1) delta and epsilon subunits. The protein is ATP synthase subunit c of Staphylococcus saprophyticus subsp. saprophyticus (strain ATCC 15305 / DSM 20229 / NCIMB 8711 / NCTC 7292 / S-41).